We begin with the raw amino-acid sequence, 236 residues long: Biosynthetic peptidoglycan transglycosylase (236 aa).

Residues 20–40 (LVFIVLSVLILPYALIGLYLL) form a helical membrane-spanning segment.

This sequence belongs to the glycosyltransferase 51 family.

It localises to the cell inner membrane. The enzyme catalyses [GlcNAc-(1-&gt;4)-Mur2Ac(oyl-L-Ala-gamma-D-Glu-L-Lys-D-Ala-D-Ala)](n)-di-trans,octa-cis-undecaprenyl diphosphate + beta-D-GlcNAc-(1-&gt;4)-Mur2Ac(oyl-L-Ala-gamma-D-Glu-L-Lys-D-Ala-D-Ala)-di-trans,octa-cis-undecaprenyl diphosphate = [GlcNAc-(1-&gt;4)-Mur2Ac(oyl-L-Ala-gamma-D-Glu-L-Lys-D-Ala-D-Ala)](n+1)-di-trans,octa-cis-undecaprenyl diphosphate + di-trans,octa-cis-undecaprenyl diphosphate + H(+). It functions in the pathway cell wall biogenesis; peptidoglycan biosynthesis. Functionally, peptidoglycan polymerase that catalyzes glycan chain elongation from lipid-linked precursors. The chain is Biosynthetic peptidoglycan transglycosylase from Rhizobium meliloti (strain 1021) (Ensifer meliloti).